The sequence spans 200 residues: Probable molybdenum cofactor guanylyltransferase (200 aa).

GTP contacts are provided by residues 9 to 11 (LAG), Lys-21, Asp-69, and Asp-100. Asp-100 is a Mg(2+) binding site.

This sequence belongs to the MobA family. Mg(2+) is required as a cofactor.

Its subcellular location is the cytoplasm. The catalysed reaction is Mo-molybdopterin + GTP + H(+) = Mo-molybdopterin guanine dinucleotide + diphosphate. Functionally, transfers a GMP moiety from GTP to Mo-molybdopterin (Mo-MPT) cofactor (Moco or molybdenum cofactor) to form Mo-molybdopterin guanine dinucleotide (Mo-MGD) cofactor. In Bacillus anthracis (strain CDC 684 / NRRL 3495), this protein is Probable molybdenum cofactor guanylyltransferase.